We begin with the raw amino-acid sequence, 353 residues long: MELMVVEADAKLRVARLIDANLDRAREGLRVIEDWCRFGLDRDDLVLPLKDWRQRLGQQHHDRYRRARSTATDVAAGLGHPAQTSRCSAPAIIKANASRVQEALRVLEEFGRNLDPDLASTAAEIRYGLYDLEVRILEACGRQHRQERLEGAKLCLITDPDRDNNLERLLHGVEAALMAGVSLVQYRRKQGNDKQRLLEAQALKTLCSRFEALFIVNDRIDLALLVDADGVHLGQDDLPLSEARQLLGPERLLGRSTHRLEHLLEAQQAGADYLGVGPVFATKTKRDLSPAGLSWVTEASRHAAVPWFAIGGIDIETIPSVRAAGAQRVAVVSAIMSSNDPEEASRTLLQTLA.

Positions 1-128 (MELMVVEADA…ASTAAEIRYG (128 aa)) are unknown. The tract at residues 129–353 (LYDLEVRILE…ASRTLLQTLA (225 aa)) is thiamine-phosphate synthase. 4-amino-2-methyl-5-(diphosphooxymethyl)pyrimidine contacts are provided by residues 185-189 (QYRRK) and asparagine 217. Residues aspartate 218 and aspartate 237 each contribute to the Mg(2+) site. Serine 256 provides a ligand contact to 4-amino-2-methyl-5-(diphosphooxymethyl)pyrimidine. Residue 282–284 (TKT) participates in 2-[(2R,5Z)-2-carboxy-4-methylthiazol-5(2H)-ylidene]ethyl phosphate binding. Lysine 285 is a 4-amino-2-methyl-5-(diphosphooxymethyl)pyrimidine binding site. Glycine 312 is a 2-[(2R,5Z)-2-carboxy-4-methylthiazol-5(2H)-ylidene]ethyl phosphate binding site.

It belongs to the thiamine-phosphate synthase family. It depends on Mg(2+) as a cofactor.

It carries out the reaction 2-[(2R,5Z)-2-carboxy-4-methylthiazol-5(2H)-ylidene]ethyl phosphate + 4-amino-2-methyl-5-(diphosphooxymethyl)pyrimidine + 2 H(+) = thiamine phosphate + CO2 + diphosphate. The enzyme catalyses 2-(2-carboxy-4-methylthiazol-5-yl)ethyl phosphate + 4-amino-2-methyl-5-(diphosphooxymethyl)pyrimidine + 2 H(+) = thiamine phosphate + CO2 + diphosphate. It catalyses the reaction 4-methyl-5-(2-phosphooxyethyl)-thiazole + 4-amino-2-methyl-5-(diphosphooxymethyl)pyrimidine + H(+) = thiamine phosphate + diphosphate. The protein operates within cofactor biosynthesis; thiamine diphosphate biosynthesis; thiamine phosphate from 4-amino-2-methyl-5-diphosphomethylpyrimidine and 4-methyl-5-(2-phosphoethyl)-thiazole: step 1/1. In terms of biological role, condenses 4-methyl-5-(beta-hydroxyethyl)thiazole monophosphate (THZ-P) and 2-methyl-4-amino-5-hydroxymethyl pyrimidine pyrophosphate (HMP-PP) to form thiamine monophosphate (TMP). This is Thiamine-phosphate synthase from Synechococcus sp. (strain CC9311).